Reading from the N-terminus, the 291-residue chain is RPE-retinal G protein-coupled receptor (291 aa).

The Extracellular segment spans residues 1-15 (MAATRALPAGLGELE). The helical transmembrane segment at 16-36 (VLAVGTVLLMEALSGISLNGL) threads the bilayer. Topologically, residues 37 to 52 (TIFSFCKTPDLRTPSN) are cytoplasmic. A helical transmembrane segment spans residues 53 to 73 (LLVLSLALADTGISLNALVAA). The Extracellular segment spans residues 74 to 91 (VSSLLRRWPHGSEGCQVH). A disulfide bridge links Cys88 with Cys162. The chain crosses the membrane as a helical span at residues 92-112 (GFQGFATALASICGSAAVAWG). The Cytoplasmic segment spans residues 113-130 (RYHHYCTRRQLAWDTAIP). Residues 131-151 (LVLFVWMSSAFWASLPLMGWG) traverse the membrane as a helical segment. At 152-175 (HYDYEPVGTCCTLDYSRGDRNFIS) the chain is on the extracellular side. Residues 176–196 (FLFTMAFFNFLVPLFITHTSY) form a helical membrane-spanning segment. The Cytoplasmic portion of the chain corresponds to 197-219 (RFMEQKFSRSGHLPVNTTLPGRM). Residues 220–240 (LLLGWGPYALLYLYAAIADVS) form a helical membrane-spanning segment. Residues 241–247 (FISPKLQ) lie on the Extracellular side of the membrane. Residues 248 to 268 (MVPALIAKTMPTINAINYALH) traverse the membrane as a helical segment. An N6-(retinylidene)lysine modification is found at Lys255. Topologically, residues 269–291 (REMVCRGTWQCLSPQKSKKDRTQ) are cytoplasmic.

Belongs to the G-protein coupled receptor 1 family. Opsin subfamily. Covalently binds all-trans- and 11-cis-retinal.

It localises to the membrane. Receptor for all-trans- and 11-cis-retinal. Binds preferentially to the former and may catalyze the isomerization of the chromophore by a retinochrome-like mechanism. The polypeptide is RPE-retinal G protein-coupled receptor (Rgr) (Mus musculus (Mouse)).